Here is a 331-residue protein sequence, read N- to C-terminus: Probable allantoicase (331 aa).

It belongs to the allantoicase family.

The enzyme catalyses allantoate + H2O = (S)-ureidoglycolate + urea. The protein operates within nitrogen metabolism; (S)-allantoin degradation; (S)-ureidoglycolate from allantoate (aminidohydrolase route): step 1/1. This Pseudomonas fluorescens (strain ATCC BAA-477 / NRRL B-23932 / Pf-5) protein is Probable allantoicase.